Consider the following 523-residue polypeptide: 2-isopropylmalate synthase (523 aa).

In terms of domain architecture, Pyruvate carboxyltransferase spans 5–267; sequence VIIFDTTLRD…HTAINHQEIW (263 aa). Positions 14, 202, 204, and 238 each coordinate Mn(2+). The tract at residues 392-523 is regulatory domain; it reads RLDYFSVQSG…QHNENNKETV (132 aa).

Belongs to the alpha-IPM synthase/homocitrate synthase family. LeuA type 1 subfamily. Homodimer. The cofactor is Mn(2+).

Its subcellular location is the cytoplasm. The enzyme catalyses 3-methyl-2-oxobutanoate + acetyl-CoA + H2O = (2S)-2-isopropylmalate + CoA + H(+). It functions in the pathway amino-acid biosynthesis; L-leucine biosynthesis; L-leucine from 3-methyl-2-oxobutanoate: step 1/4. Functionally, catalyzes the condensation of the acetyl group of acetyl-CoA with 3-methyl-2-oxobutanoate (2-ketoisovalerate) to form 3-carboxy-3-hydroxy-4-methylpentanoate (2-isopropylmalate). This is 2-isopropylmalate synthase from Shigella sonnei (strain Ss046).